We begin with the raw amino-acid sequence, 490 residues long: Histone-lysine N-methyltransferase Smyd1 (490 aa).

One can recognise an SET domain in the interval 7–253; that stretch reads ENVEVFTSEG…EGEELTVSYI (247 aa). 17-19 contacts S-adenosyl-L-methionine; sequence KGR. Residues cysteine 52, cysteine 55, cysteine 65, cysteine 68, cysteine 74, cysteine 78, histidine 86, and cysteine 90 each coordinate Zn(2+). The segment at 52–90 adopts an MYND-type zinc-finger fold; that stretch reads CHTCFKRQEKLHRCGQCKFAHYCDRTCQKDAWLNHKNEC. S-adenosyl-L-methionine is bound by residues histidine 135 and 205-206; that span reads NH. Cysteine 208 is a Zn(2+) binding site. 270-272 lines the S-adenosyl-L-methionine pocket; the sequence is YYF. Residues cysteine 274, cysteine 276, and cysteine 279 each contribute to the Zn(2+) site.

It belongs to the class V-like SAM-binding methyltransferase superfamily. As to quaternary structure, interacts with HDAC1, HDAC2 and HDAC3. Interacts (via MYND-type zinc finger) with NACA isoform skNAC. As to expression, expressed in cardiac and skeletal muscle, lymphocytes and thymus.

It is found in the cytoplasm. It localises to the nucleus. The catalysed reaction is L-lysyl(4)-[histone H3] + 3 S-adenosyl-L-methionine = N(6),N(6),N(6)-trimethyl-L-lysyl(4)-[histone H3] + 3 S-adenosyl-L-homocysteine + 3 H(+). In terms of biological role, methylates histone H3 at 'Lys-4' (H3K4me). Acts as a transcriptional repressor. Essential for cardiomyocyte differentiation and cardiac morphogenesis. The protein is Histone-lysine N-methyltransferase Smyd1 (Smyd1) of Mus musculus (Mouse).